Consider the following 172-residue polypeptide: Translation initiation factor IF-3 (172 aa).

This sequence belongs to the IF-3 family. Monomer.

The protein localises to the cytoplasm. In terms of biological role, IF-3 binds to the 30S ribosomal subunit and shifts the equilibrium between 70S ribosomes and their 50S and 30S subunits in favor of the free subunits, thus enhancing the availability of 30S subunits on which protein synthesis initiation begins. The sequence is that of Translation initiation factor IF-3 from Bartonella quintana (strain Toulouse) (Rochalimaea quintana).